The sequence spans 56 residues: MNDQKNISINEAIKQFPQEFNNRIGFELNRINTNLRFSHFEEQRGNMFFLMSNLNV.

This is an uncharacterized protein from Dictyostelium discoideum (Social amoeba).